A 77-amino-acid polypeptide reads, in one-letter code: U8-lycotoxin-Ls1o (77 aa).

A signal peptide spans 1–20 (MKLMIFTGLVLFAIVSLIEA). Residues 21 to 26 (QAENGK) constitute a propeptide that is removed on maturation.

This sequence belongs to the neurotoxin 19 (CSTX) family. 08 (U8-Lctx) subfamily. In terms of processing, contains 4 disulfide bonds. Expressed by the venom gland.

It is found in the secreted. The polypeptide is U8-lycotoxin-Ls1o (Lycosa singoriensis (Wolf spider)).